Consider the following 251-residue polypeptide: Chorismate mutase (251 aa).

The 251-residue stretch at 1-251 folds into the Chorismate mutase domain; that stretch reads MSLVNEKLKL…EVDYLLARLL (251 aa). L-tyrosine contacts are provided by Arg74, Arg75, Asn134, Gly136, and Ser137. Asn134, Gly136, and Ser137 together coordinate L-tryptophan.

Homodimer.

The protein localises to the cytoplasm. It carries out the reaction chorismate = prephenate. Its pathway is metabolic intermediate biosynthesis; prephenate biosynthesis; prephenate from chorismate: step 1/1. Each dimer has two allosteric binding sites that can bind the regulatory effectors tryptophan or tyrosine. Can bind either one tryptophan or one tyrosine, two tryptophan or two tyrosine or one tryptophan and one tyrosine, which differentially affect the catalytic activity. Activated by tryptophan and subject to feedback inhibition by tyrosine. In the presence of both tryptophan and tyrosine, the enzyme is in the activated state. Catalyzes the Claisen rearrangement of chorismate to prephenate. Acts at the first branch point in the aromatic amino acid pathway where it steers biosynthesis towards phenylalanine and tyrosine, and away from tryptophan. The protein is Chorismate mutase of Schizosaccharomyces pombe (strain 972 / ATCC 24843) (Fission yeast).